A 29-amino-acid chain; its full sequence is RICPRILMECKADSDCLAQCICQESGFCG.

Cystine bridges form between Cys-3–Cys-20, Cys-10–Cys-22, and Cys-16–Cys-28.

Belongs to the protease inhibitor I7 (squash-type serine protease inhibitor) family.

The protein localises to the secreted. Its function is as follows. Strongly inhibits trypsin, weakly inhibits chymotrypsin. This Cyclanthera pedata (Achocha) protein is Trypsin inhibitor 5.